Reading from the N-terminus, the 311-residue chain is Methionyl-tRNA formyltransferase (311 aa).

112–115 is a binding site for (6S)-5,6,7,8-tetrahydrofolate; it reads SLLP.

The protein belongs to the Fmt family.

The enzyme catalyses L-methionyl-tRNA(fMet) + (6R)-10-formyltetrahydrofolate = N-formyl-L-methionyl-tRNA(fMet) + (6S)-5,6,7,8-tetrahydrofolate + H(+). In terms of biological role, attaches a formyl group to the free amino group of methionyl-tRNA(fMet). The formyl group appears to play a dual role in the initiator identity of N-formylmethionyl-tRNA by promoting its recognition by IF2 and preventing the misappropriation of this tRNA by the elongation apparatus. The protein is Methionyl-tRNA formyltransferase of Bradyrhizobium sp. (strain BTAi1 / ATCC BAA-1182).